The primary structure comprises 296 residues: MIFAKGHGTQNDFVVLPDVEADVTFTAAQVAALCNRRQGLGADGVLRVTTAGAAVTAGVLEHLPDGVSCSDWYMDYRNADGSVAQMCGNGVRVFAHYLRASGLESCDEFVVGSLAGPRLVNVHHVDELNADVTVDMGKANLLGSGGPAFAVTVGGRRFSGVAVDVGNPHLACMDPQLSLEELAALDLGAPVHLDRVQFPDGVNIEVLTAPVDGMVQMRVHERGVGETRSCGTGTVAAAVAALASAGADTGTLTVRVPGGDVVITITDVTSYLRGPSVLVAHGELADAWWYSLARSC.

Substrate contacts are provided by asparagine 11 and asparagine 78. Cysteine 87 serves as the catalytic Proton donor. Residues 88–89, asparagine 167, asparagine 203, and 221–222 each bind substrate; these read GN and ER. Residue cysteine 230 is the Proton acceptor of the active site. 231–232 serves as a coordination point for substrate; sequence GT.

It belongs to the diaminopimelate epimerase family. Homodimer.

It localises to the cytoplasm. It catalyses the reaction (2S,6S)-2,6-diaminopimelate = meso-2,6-diaminopimelate. Its pathway is amino-acid biosynthesis; L-lysine biosynthesis via DAP pathway; DL-2,6-diaminopimelate from LL-2,6-diaminopimelate: step 1/1. Functionally, catalyzes the stereoinversion of LL-2,6-diaminopimelate (L,L-DAP) to meso-diaminopimelate (meso-DAP), a precursor of L-lysine and an essential component of the bacterial peptidoglycan. This Mycobacterium leprae (strain Br4923) protein is Diaminopimelate epimerase.